Here is a 193-residue protein sequence, read N- to C-terminus: MYNPTVIDNNGKSERAYDIYSRLLKDRIIFVGTAIDETVANSIIAQLLYLEAEDPEKDIIMYINSPGGSVTDGMAIYDTMNYIKPDVQTVCVGQAASMGAFLLAAGAKGKRFALENSRIMIHQPLISGGLKGQATDISIHANELLKIKDRLAELLAKNTGKTKEQILRDTERDNYLSSEEAVNYGLIDSVFRR.

Residue S97 is the Nucleophile of the active site. Residue H122 is part of the active site.

The protein belongs to the peptidase S14 family. Fourteen ClpP subunits assemble into 2 heptameric rings which stack back to back to give a disk-like structure with a central cavity, resembling the structure of eukaryotic proteasomes.

Its subcellular location is the cytoplasm. It carries out the reaction Hydrolysis of proteins to small peptides in the presence of ATP and magnesium. alpha-casein is the usual test substrate. In the absence of ATP, only oligopeptides shorter than five residues are hydrolyzed (such as succinyl-Leu-Tyr-|-NHMec, and Leu-Tyr-Leu-|-Tyr-Trp, in which cleavage of the -Tyr-|-Leu- and -Tyr-|-Trp bonds also occurs).. In terms of biological role, cleaves peptides in various proteins in a process that requires ATP hydrolysis. Has a chymotrypsin-like activity. Plays a major role in the degradation of misfolded proteins. This Fusobacterium nucleatum subsp. nucleatum (strain ATCC 25586 / DSM 15643 / BCRC 10681 / CIP 101130 / JCM 8532 / KCTC 2640 / LMG 13131 / VPI 4355) protein is ATP-dependent Clp protease proteolytic subunit.